We begin with the raw amino-acid sequence, 203 residues long: Histidine biosynthesis bifunctional protein HisIE (203 aa).

The segment at 1-114 is phosphoribosyl-AMP cyclohydrolase; sequence MLTEQQRREL…FGDASHQWLF (114 aa). Residues 115–203 are phosphoribosyl-ATP pyrophosphohydrolase; sequence LYQLEQLLAE…VIDDLRKRHQ (89 aa).

The protein in the N-terminal section; belongs to the PRA-CH family. This sequence in the C-terminal section; belongs to the PRA-PH family.

The protein resides in the cytoplasm. It catalyses the reaction 1-(5-phospho-beta-D-ribosyl)-ATP + H2O = 1-(5-phospho-beta-D-ribosyl)-5'-AMP + diphosphate + H(+). The catalysed reaction is 1-(5-phospho-beta-D-ribosyl)-5'-AMP + H2O = 1-(5-phospho-beta-D-ribosyl)-5-[(5-phospho-beta-D-ribosylamino)methylideneamino]imidazole-4-carboxamide. It participates in amino-acid biosynthesis; L-histidine biosynthesis; L-histidine from 5-phospho-alpha-D-ribose 1-diphosphate: step 2/9. The protein operates within amino-acid biosynthesis; L-histidine biosynthesis; L-histidine from 5-phospho-alpha-D-ribose 1-diphosphate: step 3/9. This chain is Histidine biosynthesis bifunctional protein HisIE (hisI), found in Salmonella typhi.